Here is a 284-residue protein sequence, read N- to C-terminus: Ribose-phosphate pyrophosphokinase 1 (284 aa).

An ATP-binding site is contributed by 34 to 36 (DGE). Positions 126 and 163 each coordinate Mg(2+). K186 is an active-site residue. D-ribose 5-phosphate is bound by residues R188, D211, and 215–219 (STGGT).

This sequence belongs to the ribose-phosphate pyrophosphokinase family. Class III (archaeal) subfamily. It depends on Mg(2+) as a cofactor.

The protein localises to the cytoplasm. The catalysed reaction is D-ribose 5-phosphate + ATP = 5-phospho-alpha-D-ribose 1-diphosphate + AMP + H(+). It functions in the pathway metabolic intermediate biosynthesis; 5-phospho-alpha-D-ribose 1-diphosphate biosynthesis; 5-phospho-alpha-D-ribose 1-diphosphate from D-ribose 5-phosphate (route I): step 1/1. Involved in the biosynthesis of the central metabolite phospho-alpha-D-ribosyl-1-pyrophosphate (PRPP) via the transfer of pyrophosphoryl group from ATP to 1-hydroxyl of ribose-5-phosphate (Rib-5-P). The protein is Ribose-phosphate pyrophosphokinase 1 of Archaeoglobus fulgidus (strain ATCC 49558 / DSM 4304 / JCM 9628 / NBRC 100126 / VC-16).